The chain runs to 355 residues: Uroporphyrinogen decarboxylase (355 aa).

Substrate contacts are provided by residues 27-31 (RQAGR), F46, D77, Y154, S209, and H327.

Belongs to the uroporphyrinogen decarboxylase family. As to quaternary structure, homodimer.

The protein resides in the cytoplasm. It carries out the reaction uroporphyrinogen III + 4 H(+) = coproporphyrinogen III + 4 CO2. The protein operates within porphyrin-containing compound metabolism; protoporphyrin-IX biosynthesis; coproporphyrinogen-III from 5-aminolevulinate: step 4/4. Functionally, catalyzes the decarboxylation of four acetate groups of uroporphyrinogen-III to yield coproporphyrinogen-III. The sequence is that of Uroporphyrinogen decarboxylase from Nitrosomonas europaea (strain ATCC 19718 / CIP 103999 / KCTC 2705 / NBRC 14298).